The sequence spans 636 residues: DNA primase (636 aa).

The CHC2-type zinc-finger motif lies at 44–68 (CPFHDEKTPSFHVRPNHGHFHCFGC). The 87-residue stretch at 266–352 (HQAVVVEGYT…SGQSFVAVAA (87 aa)) folds into the Toprim domain. Mg(2+)-binding residues include glutamate 272, aspartate 323, and aspartate 325. Basic and acidic residues predominate over residues 443 to 459 (REEAKGGGRKDNNRRGQ). Residues 443-481 (REEAKGGGRKDNNRRGQETAARPKPPPVQRPDPTDPTLW) are disordered.

Belongs to the DnaG primase family. Monomer. Interacts with DnaB. Zn(2+) serves as cofactor. Requires Mg(2+) as cofactor.

The catalysed reaction is ssDNA + n NTP = ssDNA/pppN(pN)n-1 hybrid + (n-1) diphosphate.. Its function is as follows. RNA polymerase that catalyzes the synthesis of short RNA molecules used as primers for DNA polymerase during DNA replication. The chain is DNA primase from Mycolicibacterium smegmatis (strain ATCC 700084 / mc(2)155) (Mycobacterium smegmatis).